The chain runs to 149 residues: Large ribosomal subunit protein bL9 (149 aa).

Belongs to the bacterial ribosomal protein bL9 family.

Binds to the 23S rRNA. This chain is Large ribosomal subunit protein bL9, found in Buchnera aphidicola subsp. Cinara cedri (strain Cc).